The chain runs to 370 residues: Protein TEEBE (370 aa).

Positions 1 to 21 are cleaved as a signal peptide; that stretch reads MSLYHSLSIFLLLSLCHGSYS. Residue Asn-215 is glycosylated (N-linked (GlcNAc...) asparagine).

As to expression, expressed in primary and lateral roots, stigmatic papillae and hypocotyls.

The protein resides in the secreted. Its subcellular location is the cell wall. In terms of biological role, prevents hypocotyl epidermal cells elongation by modulating the pectin status in cell walls. Likely regulates pectin methylesterification degree during cell separation and elongation, including upon root-knot nematode Meloidogyne incognita infection. In Arabidopsis thaliana (Mouse-ear cress), this protein is Protein TEEBE.